The chain runs to 494 residues: UDP-N-acetylmuramoyl-L-alanyl-D-glutamate--L-lysine ligase (494 aa).

UDP-N-acetyl-alpha-D-muramoyl-L-alanyl-D-glutamate is bound at residue S30. Residue 110-116 participates in ATP binding; the sequence is GTNGKTS. Residues 152 to 153, S179, and R187 each bind UDP-N-acetyl-alpha-D-muramoyl-L-alanyl-D-glutamate; that span reads TT. K219 carries the post-translational modification N6-carboxylysine. The L-lysine recognition motif motif lies at 406–409; that stretch reads DNPA.

This sequence belongs to the MurCDEF family. MurE subfamily. In terms of processing, carboxylation is probably crucial for Mg(2+) binding and, consequently, for the gamma-phosphate positioning of ATP.

The protein localises to the cytoplasm. It catalyses the reaction UDP-N-acetyl-alpha-D-muramoyl-L-alanyl-D-glutamate + L-lysine + ATP = UDP-N-acetyl-alpha-D-muramoyl-L-alanyl-gamma-D-glutamyl-L-lysine + ADP + phosphate + H(+). It participates in cell wall biogenesis; peptidoglycan biosynthesis. Functionally, catalyzes the addition of L-lysine to the nucleotide precursor UDP-N-acetylmuramoyl-L-alanyl-D-glutamate (UMAG) in the biosynthesis of bacterial cell-wall peptidoglycan. This Staphylococcus aureus (strain MW2) protein is UDP-N-acetylmuramoyl-L-alanyl-D-glutamate--L-lysine ligase.